Here is a 314-residue protein sequence, read N- to C-terminus: MKQYLDLEKYVLENGTQKGDRTGTGTISTFGYQMRFDLQEGFPIMTTKRVPFKLVVSELLWFLHGDTNIRYLLQHNNNIWNEWAFERFVKSDDYKGEDMTDFGLRAERDSAFKEVYQAEMEKFKARILEDEAFANKYGELGNIYGKQWREWKTSQGETIDQLADLIEMIKTNPNSRRLIVSAWNPEDIPNMALPPCHSLFQFYVADGKLSCQLYQRSADIFLGVPFNIASYALLTHLIAREVGLEVGEFIHTMGDAHLYNNHIEQVKEQLSRTPHKLPKLVLSDKPATIFDFDVADISLDGYNPDPAIKAPISV.

DUMP is bound by residues R21 and 176 to 177 (RR). The active-site Nucleophile is C196. DUMP contacts are provided by residues 216–219 (RSAD), N227, and 257–259 (HLY). D219 serves as a coordination point for (6R)-5,10-methylene-5,6,7,8-tetrahydrofolate. S313 lines the (6R)-5,10-methylene-5,6,7,8-tetrahydrofolate pocket.

This sequence belongs to the thymidylate synthase family. Bacterial-type ThyA subfamily. As to quaternary structure, homodimer.

The protein resides in the cytoplasm. It carries out the reaction dUMP + (6R)-5,10-methylene-5,6,7,8-tetrahydrofolate = 7,8-dihydrofolate + dTMP. It participates in pyrimidine metabolism; dTTP biosynthesis. Its function is as follows. Catalyzes the reductive methylation of 2'-deoxyuridine-5'-monophosphate (dUMP) to 2'-deoxythymidine-5'-monophosphate (dTMP) while utilizing 5,10-methylenetetrahydrofolate (mTHF) as the methyl donor and reductant in the reaction, yielding dihydrofolate (DHF) as a by-product. This enzymatic reaction provides an intracellular de novo source of dTMP, an essential precursor for DNA biosynthesis. The chain is Thymidylate synthase from Listeria monocytogenes serotype 4b (strain F2365).